Reading from the N-terminus, the 391-residue chain is Tryptophan synthase beta chain 2 (391 aa).

Lysine 83 is modified (N6-(pyridoxal phosphate)lysine).

The protein belongs to the TrpB family. In terms of assembly, tetramer of two alpha and two beta chains. It depends on pyridoxal 5'-phosphate as a cofactor.

It catalyses the reaction (1S,2R)-1-C-(indol-3-yl)glycerol 3-phosphate + L-serine = D-glyceraldehyde 3-phosphate + L-tryptophan + H2O. The protein operates within amino-acid biosynthesis; L-tryptophan biosynthesis; L-tryptophan from chorismate: step 5/5. Functionally, the beta subunit is responsible for the synthesis of L-tryptophan from indole and L-serine. In Chlamydia caviae (strain ATCC VR-813 / DSM 19441 / 03DC25 / GPIC) (Chlamydophila caviae), this protein is Tryptophan synthase beta chain 2 (trpB2).